A 291-amino-acid chain; its full sequence is Tetrahydromethanopterin:alpha-L-glutamate ligase (291 aa).

The 186-residue stretch at 101 to 286 folds into the ATP-grasp domain; the sequence is SVFLELNNLP…IADKLLEKII (186 aa). ATP is bound by residues K136, 175–187, and R203; that span reads QEFI…EHRD. Mg(2+) is bound by residues D247, E259, and N261. D247, E259, and N261 together coordinate Mn(2+).

This sequence belongs to the RimK family. MptN subfamily. Homodimer. Mg(2+) is required as a cofactor. Mn(2+) serves as cofactor.

The enzyme catalyses 5,6,7,8-tetrahydromethanopterin + L-glutamate + ATP = 5,6,7,8-tetrahydrosarcinapterin + ADP + phosphate + H(+). It functions in the pathway cofactor biosynthesis; 5,6,7,8-tetrahydrosarcinapterin biosynthesis. Catalyzes the ATP or GTP-dependent addition of one L-glutamate molecule to tetrahydromethanopterin, producing tetrahydrosarcinapterin. This is Tetrahydromethanopterin:alpha-L-glutamate ligase (mptN) from Methanocaldococcus jannaschii (strain ATCC 43067 / DSM 2661 / JAL-1 / JCM 10045 / NBRC 100440) (Methanococcus jannaschii).